Here is a 557-residue protein sequence, read N- to C-terminus: Formate--tetrahydrofolate ligase (557 aa).

66–73 (TPAGEGKS) serves as a coordination point for ATP.

This sequence belongs to the formate--tetrahydrofolate ligase family.

It catalyses the reaction (6S)-5,6,7,8-tetrahydrofolate + formate + ATP = (6R)-10-formyltetrahydrofolate + ADP + phosphate. The protein operates within one-carbon metabolism; tetrahydrofolate interconversion. This is Formate--tetrahydrofolate ligase from Clostridium botulinum (strain Okra / Type B1).